We begin with the raw amino-acid sequence, 224 residues long: Deoxyribose-phosphate aldolase (224 aa).

The active-site Proton donor/acceptor is the Asp-94. Lys-158 functions as the Schiff-base intermediate with acetaldehyde in the catalytic mechanism. Lys-187 (proton donor/acceptor) is an active-site residue.

The protein belongs to the DeoC/FbaB aldolase family. DeoC type 1 subfamily. Homodimer.

It is found in the cytoplasm. The enzyme catalyses 2-deoxy-D-ribose 5-phosphate = D-glyceraldehyde 3-phosphate + acetaldehyde. With respect to regulation, activated by citrate. Inhibited by NaBH(4). Activity is independent of divalent metal cations. In terms of biological role, catalyzes a reversible aldol reaction between acetaldehyde and D-glyceraldehyde 3-phosphate to generate 2-deoxy-D-ribose 5-phosphate. Could be involved in pentose biosynthesis. The chain is Deoxyribose-phosphate aldolase from Thermococcus kodakarensis (strain ATCC BAA-918 / JCM 12380 / KOD1) (Pyrococcus kodakaraensis (strain KOD1)).